A 218-amino-acid chain; its full sequence is NAD(P)H-quinone oxidoreductase subunit I (218 aa).

2 consecutive 4Fe-4S ferredoxin-type domains span residues 55-84 (GRIHYEFDKCIACEVCVRVCPINLPVVDWV) and 95-124 (RNYSIDFGACIFCGNCVEYCPTNCLSMTEE). [4Fe-4S] cluster contacts are provided by Cys64, Cys67, Cys70, Cys74, Cys104, Cys107, Cys110, and Cys114. The disordered stretch occupies residues 169 to 218 (MDPHELPANQQRAGKLPSQIIKELQAEKSEEKGNNNSSDIVPNKLNSTNK). A compositionally biased stretch (basic and acidic residues) spans 192 to 201 (LQAEKSEEKG). The span at 202-218 (NNNSSDIVPNKLNSTNK) shows a compositional bias: polar residues.

It belongs to the complex I 23 kDa subunit family. NDH-1 is composed of at least 11 different subunits. Requires [4Fe-4S] cluster as cofactor.

It is found in the cellular thylakoid membrane. It carries out the reaction a plastoquinone + NADH + (n+1) H(+)(in) = a plastoquinol + NAD(+) + n H(+)(out). The enzyme catalyses a plastoquinone + NADPH + (n+1) H(+)(in) = a plastoquinol + NADP(+) + n H(+)(out). NDH-1 shuttles electrons from an unknown electron donor, via FMN and iron-sulfur (Fe-S) centers, to quinones in the respiratory and/or the photosynthetic chain. The immediate electron acceptor for the enzyme in this species is believed to be plastoquinone. Couples the redox reaction to proton translocation, and thus conserves the redox energy in a proton gradient. This is NAD(P)H-quinone oxidoreductase subunit I from Prochlorococcus marinus (strain NATL1A).